The chain runs to 172 residues: Adenine phosphoribosyltransferase (172 aa).

This sequence belongs to the purine/pyrimidine phosphoribosyltransferase family. In terms of assembly, homodimer.

The protein localises to the cytoplasm. It catalyses the reaction AMP + diphosphate = 5-phospho-alpha-D-ribose 1-diphosphate + adenine. The protein operates within purine metabolism; AMP biosynthesis via salvage pathway; AMP from adenine: step 1/1. In terms of biological role, catalyzes a salvage reaction resulting in the formation of AMP, that is energically less costly than de novo synthesis. This is Adenine phosphoribosyltransferase from Lactiplantibacillus plantarum (strain ATCC BAA-793 / NCIMB 8826 / WCFS1) (Lactobacillus plantarum).